The following is a 1002-amino-acid chain: Isoleucine--tRNA ligase, mitochondrial (1002 aa).

Residues 94–104 carry the 'HIGH' region motif; sequence PYANGELHLGH. The 'KMSKS' region motif lies at 668–672; the sequence is KMSKS. Lys-671 contacts ATP.

Belongs to the class-I aminoacyl-tRNA synthetase family.

Its subcellular location is the mitochondrion matrix. It catalyses the reaction tRNA(Ile) + L-isoleucine + ATP = L-isoleucyl-tRNA(Ile) + AMP + diphosphate. In Saccharomyces cerevisiae (strain ATCC 204508 / S288c) (Baker's yeast), this protein is Isoleucine--tRNA ligase, mitochondrial (ISM1).